The primary structure comprises 382 residues: MSSVEAVTQQQLLAAENPVRMGKGAADPRRAALGEITNRNAAAAANRKMGPSKKQPKPSCAQKPQPVVHTSAGDPAPISADMSMKVEQDLSQAFSEVLMLAVQDVDEQDADQPQLCSQYVKDIYKYLHTLEEQQAIRPNYMQGYSVTEHMRALLVDWLVQVHSRFQLLQETLYLTVAILDRFLQVHPVSRRKLQLVGVTAMLVACKYEEMYPPEVGDFAYITDDAFTKFQIVEMEQVILRSLGFQLGRPLPLHFLRRASKVADADVEKHTLAKYLLELTLLDYHMVHYRPSEAAAAALCLSQLLLDGLPWSLEQQHYSTYDEQHLKPIMQLMAKNVVQVTEGRTKFLAVKKKYSSSKLMKISLIPQLNSSTIKVMAEALQNP.

Polar residues predominate over residues 1–12 (MSSVEAVTQQQL). The interval 1 to 78 (MSSVEAVTQQ…HTSAGDPAPI (78 aa)) is disordered. The segment covering 38-47 (NRNAAAAANR) has biased composition (low complexity).

It belongs to the cyclin family. Cyclin AB subfamily. As to quaternary structure, interacts with the CDK1 protein kinase to form a serine/threonine kinase holoenzyme complex also known as maturation promoting factor (MPF). The cyclin subunit imparts substrate specificity to the complex.

Its function is as follows. Essential for the control of the cell cycle at the G2/M (mitosis) transition. The polypeptide is G2/mitotic-specific cyclin-B2 (ccnb2) (Oryzias javanicus (Javanese ricefish)).